Here is a 252-residue protein sequence, read N- to C-terminus: TVP38/TMEM64 family membrane protein Mb1528c (252 aa).

Helical transmembrane passes span I32 to P52, L64 to F84, A88 to V108, W149 to A169, I177 to I197, and L209 to I229.

The protein belongs to the TVP38/TMEM64 family.

The protein resides in the cell membrane. In Mycobacterium bovis (strain ATCC BAA-935 / AF2122/97), this protein is TVP38/TMEM64 family membrane protein Mb1528c.